The following is a 739-amino-acid chain: Probable beta-glucosidase L (739 aa).

Residues 1 to 17 (MQTLFLSLLAAAVTVHA) form the signal peptide. Residues Asn40 and Asn224 are each glycosylated (N-linked (GlcNAc...) asparagine). Residue Asp252 is part of the active site. Asn398 carries N-linked (GlcNAc...) asparagine glycosylation.

This sequence belongs to the glycosyl hydrolase 3 family.

The protein resides in the secreted. The enzyme catalyses Hydrolysis of terminal, non-reducing beta-D-glucosyl residues with release of beta-D-glucose.. It participates in glycan metabolism; cellulose degradation. Functionally, beta-glucosidases are one of a number of cellulolytic enzymes involved in the degradation of cellulosic biomass. Catalyzes the last step releasing glucose from the inhibitory cellobiose. This chain is Probable beta-glucosidase L (bglL), found in Aspergillus fumigatus (strain ATCC MYA-4609 / CBS 101355 / FGSC A1100 / Af293) (Neosartorya fumigata).